Consider the following 204-residue polypeptide: Terpene cyclase ausL (204 aa).

5 consecutive transmembrane segments (helical) span residues Leu-19–Val-39, Ala-49–Tyr-69, His-75–Leu-95, Leu-114–Leu-134, and Gly-138–Val-158.

Belongs to the paxB family.

The protein localises to the membrane. The protein operates within secondary metabolite biosynthesis; terpenoid biosynthesis. In terms of biological role, terpene cyclase; part of the gene cluster B that mediates the biosynthesis of austinol and dehydroaustinol, two fungal meroterpenoids. The first step of the pathway is the synthesis of 3,5-dimethylorsellinic acid by the polyketide synthase ausA. 3,5-dimethylorsellinic acid is then prenylated by the polyprenyl transferase ausN. Further epoxidation by the FAD-dependent monooxygenase ausM and cyclization by the probable terpene cyclase ausL lead to the formation of protoaustinoid A. Protoaustinoid A is then oxidized to spiro-lactone preaustinoid A3 by the combined action of the FAD-binding monooxygenases ausB and ausC, and the dioxygenase ausE. Acid-catalyzed keto-rearrangement and ring contraction of the tetraketide portion of preaustinoid A3 by ausJ lead to the formation of preaustinoid A4. The aldo-keto reductase ausK, with the help of ausH, is involved in the next step by transforming preaustinoid A4 into isoaustinone which is in turn hydroxylated by the P450 monooxygenase ausI to form austinolide. Finally, the cytochrome P450 monooxygenase ausG modifies austinolide to austinol. Austinol can be further modified to dehydroaustinol which forms a diffusible complex with diorcinol that initiates conidiation. Due to genetic rearrangements of the clusters and the subsequent loss of some enzymes, the end products of the Emericella nidulans austinoid biosynthesis clusters are austinol and dehydroaustinol, even if additional enzymes, such as the O-acetyltransferase ausQ and the cytochrome P450 monooxygenase ausR are still functional. The sequence is that of Terpene cyclase ausL from Emericella nidulans (strain FGSC A4 / ATCC 38163 / CBS 112.46 / NRRL 194 / M139) (Aspergillus nidulans).